The following is a 608-amino-acid chain: MPMASWTLPYRVEAVDRDPGFYWQEIEDGHNNDGSADFFGQFINFDSEIPSSMADHHGHNPGMPTLADGLMLDHPSESTASASSGVSTTEDEFDLFSCSSQVDATVPSQPGSSAAPGASHDVDPRSLALADSSGLMVEKHSMVPRVSMSDPELPRVDGISLQSSPGRRVPVSQPSSPTPPNTMTRKPNKFVEALSSTIRKASKLRKPRKPIAMDRPGSPTMDNPPRALRLQHHEYNGNDVFPPSPTTCGPDSTNFVHGFCDDPFDEIPQQHPNNMRFFKTNGIHTPAESPGIKTEPGMYQPEMAGQAVWPHQQHPHPHPHPHHPQAHTHPHPHPHPHPHQQAVAGHPQHAVPVVGPAPETWPGHEYMAQNAHQSGWWDLNLLNQNGEYVVVDPQQQKNANLNLAMHAQHAELPYEYQVHDPNSAGLMIHMPQPRNDSTPAHDLALNAQTYLPPPPPIPPTTERHRPPRAPSSGARHLSCSPIRKTRQPSIPPTPTTVHSRHSSNGSVASARSASGRGMVPGTPTAMRKQRRSRDSSGGSVGDIGFVNFTPSDGGLLMTGVAPSGSSKTKARREREAMERRRRLSEAAMKAVQAAGGDVDKLMEQGFAF.

Disordered stretches follow at residues 54–88 (ADHH…GVST), 102–125 (VDAT…VDPR), 146–186 (VSMS…MTRK), 202–226 (SKLR…NPPR), 309–352 (WPHQ…HAVP), 447–544 (AQTY…GDIG), and 556–576 (LMTG…EREA). Composition is skewed to low complexity over residues 77 to 88 (ESTASASSGVST), 107 to 119 (PSQP…PGAS), and 163 to 175 (SSPG…SQPS). Positions 313 to 338 (QHPHPHPHPHHPQAHTHPHPHPHPHP) are enriched in basic residues. Composition is skewed to low complexity over residues 339 to 350 (HQQAVAGHPQHA) and 502 to 517 (SSNG…SGRG).

The protein belongs to the wetA family.

In terms of biological role, abaA and wetA are pivotal regulators of conidiophore development and conidium maturation. They act individually and together to regulate their own expression and that of numerous other sporulation-specific genes. Functions to maintain conidial dormancy by suppressing microcycle conidiation. In Gibberella zeae (strain ATCC MYA-4620 / CBS 123657 / FGSC 9075 / NRRL 31084 / PH-1) (Wheat head blight fungus), this protein is Developmental regulatory protein wetA.